Reading from the N-terminus, the 431-residue chain is Histidinol dehydrogenase (431 aa).

NAD(+) contacts are provided by Tyr-124, Gln-187, and Asn-210. Substrate is bound by residues Ser-236, Gln-258, and His-261. Gln-258 and His-261 together coordinate Zn(2+). Catalysis depends on proton acceptor residues Glu-325 and His-326. Substrate-binding residues include His-326, Asp-359, Glu-413, and His-418. Asp-359 is a Zn(2+) binding site. His-418 is a binding site for Zn(2+).

The protein belongs to the histidinol dehydrogenase family. It depends on Zn(2+) as a cofactor.

The catalysed reaction is L-histidinol + 2 NAD(+) + H2O = L-histidine + 2 NADH + 3 H(+). It functions in the pathway amino-acid biosynthesis; L-histidine biosynthesis; L-histidine from 5-phospho-alpha-D-ribose 1-diphosphate: step 9/9. In terms of biological role, catalyzes the sequential NAD-dependent oxidations of L-histidinol to L-histidinaldehyde and then to L-histidine. This Legionella pneumophila subsp. pneumophila (strain Philadelphia 1 / ATCC 33152 / DSM 7513) protein is Histidinol dehydrogenase.